A 509-amino-acid polypeptide reads, in one-letter code: ATP synthase subunit alpha (509 aa).

169-176 (GDRQTGKT) lines the ATP pocket.

The protein belongs to the ATPase alpha/beta chains family. F-type ATPases have 2 components, CF(1) - the catalytic core - and CF(0) - the membrane proton channel. CF(1) has five subunits: alpha(3), beta(3), gamma(1), delta(1), epsilon(1). CF(0) has three main subunits: a(1), b(2) and c(9-12). The alpha and beta chains form an alternating ring which encloses part of the gamma chain. CF(1) is attached to CF(0) by a central stalk formed by the gamma and epsilon chains, while a peripheral stalk is formed by the delta and b chains.

The protein localises to the cell inner membrane. It catalyses the reaction ATP + H2O + 4 H(+)(in) = ADP + phosphate + 5 H(+)(out). Produces ATP from ADP in the presence of a proton gradient across the membrane. The alpha chain is a regulatory subunit. This is ATP synthase subunit alpha from Brucella melitensis biotype 1 (strain ATCC 23456 / CCUG 17765 / NCTC 10094 / 16M).